A 340-amino-acid chain; its full sequence is Ferredoxin--NADP reductase (340 aa).

Residues aspartate 33, glutamine 41, tyrosine 46, alanine 86, phenylalanine 120, aspartate 286, and threonine 327 each contribute to the FAD site.

Belongs to the ferredoxin--NADP reductase type 2 family. Homodimer. Requires FAD as cofactor.

The enzyme catalyses 2 reduced [2Fe-2S]-[ferredoxin] + NADP(+) + H(+) = 2 oxidized [2Fe-2S]-[ferredoxin] + NADPH. This chain is Ferredoxin--NADP reductase, found in Rickettsia conorii (strain ATCC VR-613 / Malish 7).